The chain runs to 172 residues: Large ribosomal subunit protein uL10 (172 aa).

Belongs to the universal ribosomal protein uL10 family. Part of the ribosomal stalk of the 50S ribosomal subunit. The N-terminus interacts with L11 and the large rRNA to form the base of the stalk. The C-terminus forms an elongated spine to which L12 dimers bind in a sequential fashion forming a multimeric L10(L12)X complex.

In terms of biological role, forms part of the ribosomal stalk, playing a central role in the interaction of the ribosome with GTP-bound translation factors. The protein is Large ribosomal subunit protein uL10 of Bartonella bacilliformis (strain ATCC 35685 / KC583 / Herrer 020/F12,63).